We begin with the raw amino-acid sequence, 261 residues long: Zaragozic acid A biosynthesis cluster protein 8 (261 aa).

Over residues 242 to 254 (GTRSHTPAATQRR) the composition is skewed to polar residues. The interval 242–261 (GTRSHTPAATQRRGQGRGCG) is disordered.

Its pathway is secondary metabolite biosynthesis. Part of the gene cluster that mediates the biosynthesis of squalestatin S1 (SQS1, also known as zaragozic acid A), a heavily oxidized fungal polyketide that offers potent cholesterol lowering activity by targeting squalene synthase (SS). SQS1 is composed of a 2,8-dioxobicyclic[3.2.1]octane-3,4,5-tricarboxyclic acid core that is connected to two lipophilic polyketide arms. These initial steps feature the priming of an unusual benzoic acid starter unit onto the highly reducing polyketide synthase clz14, followed by oxaloacetate extension and product release to generate a tricarboxylic acid containing product. The phenylalanine ammonia lyase (PAL) clz10 and the acyl-CoA ligase clz12 are involved in transforming phenylalanine into benzoyl-CoA. The citrate synthase-like protein clz17 is involved in connecting the C-alpha-carbons of the hexaketide chain and oxaloacetate to afford the tricarboxylic acid unit. The potential hydrolytic enzymes, clz11 and clz13, are in close proximity to pks2 and may participate in product release. On the other side, the tetraketide arm is synthesized by a the squalestatin tetraketide synthase clz2 and enzymatically esterified to the core in the last biosynthetic step, by the acetyltransferase clz6. The biosynthesis of the tetraketide must involve 3 rounds of chain extension. After the first and second rounds methyl-transfer occurs, and in all rounds of extension the ketoreductase and dehydratase are active. The enoyl reductase and C-MeT of clz2 are not active in the final round of extension. The acetyltransferase clz6 appears to have a broad substrate selectivity for its acyl CoA substrate, allowing the in vitro synthesis of novel squalestatins. The biosynthesis of SQS1 requires several oxidative steps likely performed by oxidoreductases clz3, clz15 and clz16. Finally, in support of the identification of the cluster as being responsible for SQS1 production, the cluster contains a gene encoding a putative squalene synthase (SS) clz20, suggesting a likely mechanism for self-resistance. This Cochliobolus lunatus (Filamentous fungus) protein is Zaragozic acid A biosynthesis cluster protein 8.